The following is a 326-amino-acid chain: MQGSARDFLKPKLVESSQTGVNEFKVILEPLERGFGHTLGNAIRRTLLSSMTGFAVTEVVIDGVMHEFSTIDGVQEDVLDILLNLKEVSVVLNTVETAQVVIDKKGPCEITVADIETNGIDITTFNPDKVIATINDEGHMRMTLKITAGIGYDAAASRTDEASSIGGMQLDASFSPIKRVSFTVDAARVKQKVNLDKLNIMIETNGSVNAEVAIKRVATILQEQLSSFVELELVEEEVSLPTSEDFDPQLLAAVDELELTVRSANCLKAEQIYYIGDLIQKSEQDLLRTPNLGRKSLNEIKEVLTEKGLSLGTNIENWPPVDLMSE.

The interval 1–232 (MQGSARDFLK…EQLSSFVELE (232 aa)) is alpha N-terminal domain (alpha-NTD). An alpha C-terminal domain (alpha-CTD) region spans residues 246–326 (FDPQLLAAVD…NWPPVDLMSE (81 aa)).

It belongs to the RNA polymerase alpha chain family. As to quaternary structure, homodimer. The RNAP catalytic core consists of 2 alpha, 1 beta, 1 beta' and 1 omega subunit. When a sigma factor is associated with the core the holoenzyme is formed, which can initiate transcription.

The enzyme catalyses RNA(n) + a ribonucleoside 5'-triphosphate = RNA(n+1) + diphosphate. Its function is as follows. DNA-dependent RNA polymerase catalyzes the transcription of DNA into RNA using the four ribonucleoside triphosphates as substrates. The sequence is that of DNA-directed RNA polymerase subunit alpha from Vesicomyosocius okutanii subsp. Calyptogena okutanii (strain HA).